The chain runs to 351 residues: Photosystem II D2 protein 2 (351 aa).

Residues 39–59 (CAFLSIGGWFTGTTFVTSWYT) traverse the membrane as a helical segment. Position 116 (His-116) interacts with chlorophyll a. Residues 123–139 (GFMLRQFEIARLVNVRP) traverse the membrane as a helical segment. Pheophytin a is bound by residues Gln-128 and Asn-141. The chain crosses the membrane as a helical span at residues 151 to 164 (VFVSVFLMYPLGQS). His-196 is a binding site for chlorophyll a. A helical membrane pass occupies residues 206-226 (GALLCAIHGATVENTLFEDTK). A plastoquinone contacts are provided by His-213 and Phe-260. His-213 lines the Fe cation pocket. His-267 is a binding site for Fe cation. The chain crosses the membrane as a helical span at residues 277-293 (GLWASAIGLVGIALNMR).

This sequence belongs to the reaction center PufL/M/PsbA/D family. PSII is composed of 1 copy each of membrane proteins PsbA, PsbB, PsbC, PsbD, PsbE, PsbF, PsbH, PsbI, PsbJ, PsbK, PsbL, PsbM, PsbT, PsbX, PsbY, PsbZ, Psb30/Ycf12, peripheral proteins PsbO, CyanoQ (PsbQ), PsbU, PsbV and a large number of cofactors. It forms dimeric complexes. The D1/D2 heterodimer binds P680, chlorophylls that are the primary electron donor of PSII, and subsequent electron acceptors. It shares a non-heme iron and each subunit binds pheophytin, quinone, additional chlorophylls, carotenoids and lipids. There is also a Cl(-1) ion associated with D1 and D2, which is required for oxygen evolution. The PSII complex binds additional chlorophylls, carotenoids and specific lipids. serves as cofactor.

The protein localises to the cellular thylakoid membrane. The enzyme catalyses 2 a plastoquinone + 4 hnu + 2 H2O = 2 a plastoquinol + O2. Its function is as follows. Photosystem II (PSII) is a light-driven water:plastoquinone oxidoreductase that uses light energy to abstract electrons from H(2)O, generating O(2) and a proton gradient subsequently used for ATP formation. It consists of a core antenna complex that captures photons, and an electron transfer chain that converts photonic excitation into a charge separation. The D1/D2 (PsbA/PsbD) reaction center heterodimer binds P680, the primary electron donor of PSII as well as several subsequent electron acceptors. D2 is needed for assembly of a stable PSII complex. This is Photosystem II D2 protein 2 from Acaryochloris marina (strain MBIC 11017).